We begin with the raw amino-acid sequence, 475 residues long: Aspartyl/glutamyl-tRNA(Asn/Gln) amidotransferase subunit B (475 aa).

The protein belongs to the GatB/GatE family. GatB subfamily. As to quaternary structure, heterotrimer of A, B and C subunits.

The catalysed reaction is L-glutamyl-tRNA(Gln) + L-glutamine + ATP + H2O = L-glutaminyl-tRNA(Gln) + L-glutamate + ADP + phosphate + H(+). The enzyme catalyses L-aspartyl-tRNA(Asn) + L-glutamine + ATP + H2O = L-asparaginyl-tRNA(Asn) + L-glutamate + ADP + phosphate + 2 H(+). Functionally, allows the formation of correctly charged Asn-tRNA(Asn) or Gln-tRNA(Gln) through the transamidation of misacylated Asp-tRNA(Asn) or Glu-tRNA(Gln) in organisms which lack either or both of asparaginyl-tRNA or glutaminyl-tRNA synthetases. The reaction takes place in the presence of glutamine and ATP through an activated phospho-Asp-tRNA(Asn) or phospho-Glu-tRNA(Gln). In Macrococcus caseolyticus (strain JCSC5402) (Macrococcoides caseolyticum), this protein is Aspartyl/glutamyl-tRNA(Asn/Gln) amidotransferase subunit B.